The chain runs to 212 residues: Leucine efflux protein (212 aa).

The next 6 helical transmembrane spans lie at 12–32 (TYLV…LFVL), 49–69 (GVFI…ATLI), 71–91 (TTPI…LYLG), 122–142 (ILSL…VQFI), 153–173 (FFIL…FLII), and 188–208 (LAKV…ARLA).

The protein belongs to the Rht family.

Its subcellular location is the cell inner membrane. The catalysed reaction is L-leucine(in) + H(+)(out) = L-leucine(out) + H(+)(in). Its function is as follows. Exporter of leucine. The polypeptide is Leucine efflux protein (leuE) (Shigella sonnei (strain Ss046)).